We begin with the raw amino-acid sequence, 206 residues long: Thymidylate kinase (206 aa).

10 to 17 (GIDGAGKS) is a binding site for ATP.

It belongs to the thymidylate kinase family.

It carries out the reaction dTMP + ATP = dTDP + ADP. Functionally, phosphorylation of dTMP to form dTDP in both de novo and salvage pathways of dTTP synthesis. In Neisseria gonorrhoeae (strain ATCC 700825 / FA 1090), this protein is Thymidylate kinase.